A 444-amino-acid chain; its full sequence is Elongation factor 1-alpha (444 aa).

Positions Lys14–Arg235 constitute a tr-type G domain. Positions Gly23–Ser30 are G1. Gly23 to Ser30 serves as a coordination point for GTP. A Mg(2+)-binding site is contributed by Ser30. Residues Gly79–Glu83 form a G2 region. Positions Asp100–Gly103 are G3. GTP contacts are provided by residues Asp100 to His104 and Asn162 to Asp165. The segment at Asn162–Asp165 is G4. The tract at residues Ser201–Val203 is G5.

This sequence belongs to the TRAFAC class translation factor GTPase superfamily. Classic translation factor GTPase family. EF-Tu/EF-1A subfamily.

It is found in the cytoplasm. It carries out the reaction GTP + H2O = GDP + phosphate + H(+). Its function is as follows. GTP hydrolase that promotes the GTP-dependent binding of aminoacyl-tRNA to the A-site of ribosomes during protein biosynthesis. This Caldivirga maquilingensis (strain ATCC 700844 / DSM 13496 / JCM 10307 / IC-167) protein is Elongation factor 1-alpha.